Here is a 259-residue protein sequence, read N- to C-terminus: Dihydroorotate dehydrogenase B (NAD(+)), electron transfer subunit (259 aa).

Residues 2–102 form the FAD-binding FR-type domain; that stretch reads MQKQNMIVVN…LGPLGHGFPV (101 aa). FAD contacts are provided by residues 53–56, 70–72, and 77–78; these read RPIS, LYR, and GT. [2Fe-2S] cluster contacts are provided by Cys-221, Cys-226, Cys-229, and Cys-246.

This sequence belongs to the PyrK family. As to quaternary structure, heterotetramer of 2 PyrK and 2 PyrD type B subunits. It depends on [2Fe-2S] cluster as a cofactor. The cofactor is FAD.

The protein operates within pyrimidine metabolism; UMP biosynthesis via de novo pathway; orotate from (S)-dihydroorotate (NAD(+) route): step 1/1. In terms of biological role, responsible for channeling the electrons from the oxidation of dihydroorotate from the FMN redox center in the PyrD type B subunit to the ultimate electron acceptor NAD(+). This Bacillus cereus (strain 03BB102) protein is Dihydroorotate dehydrogenase B (NAD(+)), electron transfer subunit.